Consider the following 2414-residue polypeptide: Centrosome-associated protein CEP250 (2414 aa).

2 coiled-coil regions span residues 91–153 (EEPN…ELVR) and 248–357 (LVAK…VEEE). 7 disordered regions span residues 356-384 (EEDTVTQSSGHEDSLQSDCNGLSQFDPQD), 672-707 (AEEAGAELQAELRGTREEKEELKDKLSEAHHQQETA), 1191-1212 (SRPELRGGGDSAPTLWGPDPDQ), 1269-1303 (EAQKSQVHSELQDLQRQLSQSQEEKSKWEGRQNSL), 2050-2071 (AGARRSQENGIQEKQSLEQERQ), 2194-2238 (ALEE…KERL), and 2275-2317 (RERR…GSSD). Over residues 371-381 (QSDCNGLSQFD) the composition is skewed to polar residues. A coiled-coil region spans residues 400–1165 (QQAVQDLRQQ…QLEALVAEQQ (766 aa)). The span at 684–704 (RGTREEKEELKDKLSEAHHQQ) shows a compositional bias: basic and acidic residues. Coiled-coil stretches lie at residues 1237–2200 (LQKL…EQQS) and 2231–2290 (GVEE…ASRA). The span at 1280-1289 (QDLQRQLSQS) shows a compositional bias: low complexity. Residues 2196–2209 (EEQQSGGPHSTSRA) show a composition bias toward polar residues. Residues 2275 to 2286 (RERRKLKRDSVR) show a composition bias toward basic and acidic residues. Ser-2292 is modified (phosphoserine). Low complexity predominate over residues 2305 to 2317 (QQDGRGSQRGSSD). Residues 2320–2345 (LVVELQREVALLRAQLALERKQRQDY) adopt a coiled-coil conformation. 2 positions are modified to phosphoserine; by NEK2: Ser-2389 and Ser-2393. Residues 2390-2414 (LNQSLTSPGPCLLHPSLDTTQNTHR) form a disordered region.

Monomer and homodimer. Forms a complex in vitro with both NEK2 kinase and the PPP1CC catalytic subunit of protein phosphatase 1 (PP1). Interacts with CEP135. Interacts with CROCC/rootletin. Interacts with CNTLN. Interacts with NIN (via C-terminus). Post-translationally, differentially phosphorylated during cell cycle. Phosphorylation may regulate association/dissociation from centrosome. During M phase of mitosis, C-terminal part is phosphorylated by NEK2, suggesting that it may trigger the dissociation from the mitotic centrosome. Dephosphorylated in vitro by the PP1 phosphatase. Expressed in the retina.

It is found in the cytoplasm. Its subcellular location is the perinuclear region. The protein localises to the cytoskeleton. The protein resides in the microtubule organizing center. It localises to the centrosome. It is found in the centriole. Its subcellular location is the cilium basal body. The protein localises to the cell projection. The protein resides in the cilium. It localises to the photoreceptor outer segment. It is found in the photoreceptor inner segment. In terms of biological role, plays an important role in centrosome cohesion during interphase. Recruits CCDC102B to the proximal ends of centrioles. Maintains centrosome cohesion by forming intercentriolar linkages. Accumulates at the proximal end of each centriole, forming supramolecular assemblies with viscous material properties that promote organelle cohesion. May be involved in ciliogenesis. This Mus musculus (Mouse) protein is Centrosome-associated protein CEP250 (Cep250).